Consider the following 48-residue polypeptide: Lantibiotic salivaricin-A (48 aa).

The propeptide occupies 1–26 (MKNSKDILNNAIEEVSEKELMEVAGG). Cross-links (beta-methyllanthionine (Thr-Cys)) lie at residues 35 to 40 (TITDDC) and 37 to 47 (TDDCPNSVFVC). Residues 43 to 48 (SVFVCC) constitute a cross-link (lanthionine (Ser-Cys)).

The protein belongs to the type A lantibiotic family. Post-translationally, maturation of lantibiotics involves the enzymatic conversion of Thr, and Ser into dehydrated AA and the formation of thioether bonds with cysteine. This is followed by membrane translocation and cleavage of the modified precursor.

In terms of biological role, lanthionine-containing peptide antibiotic (lantibiotic) active on Gram-positive bacteria. The bactericidal activity of lantibiotics is based on depolarization of energized bacterial cytoplasmic membranes, initiated by the formation of aqueous transmembrane pores. The polypeptide is Lantibiotic salivaricin-A (salA) (Streptococcus salivarius).